The sequence spans 655 residues: DNA topoisomerase 4 subunit B (655 aa).

ATP is bound by residues Y9, N49, D76, 116–122 (GLHGVGA), and K340. Basic and acidic residues predominate over residues 387-397 (AARKAREEARS). Positions 387–419 (AARKAREEARSGKKRKKSEATLSGKLTPAGSRN) are disordered. The Toprim domain maps to 423–537 (NELYLVEGDS…HGKVFIALPP (115 aa)). 3 residues coordinate Mg(2+): E429, D502, and D504.

It belongs to the type II topoisomerase family. ParE type 2 subfamily. Heterotetramer composed of ParC and ParE. It depends on Mg(2+) as a cofactor. Requires Mn(2+) as cofactor. Ca(2+) is required as a cofactor.

The catalysed reaction is ATP-dependent breakage, passage and rejoining of double-stranded DNA.. In terms of biological role, topoisomerase IV is essential for chromosome segregation. It relaxes supercoiled DNA. Performs the decatenation events required during the replication of a circular DNA molecule. The protein is DNA topoisomerase 4 subunit B of Bacillus subtilis (strain 168).